The chain runs to 372 residues: N-methyl-L-tryptophan oxidase (372 aa).

4 to 34 serves as a coordination point for FAD; that stretch reads DLIIIGSGSVGAAAGYYATRAGLNVLMTDAH. An S-8alpha-FAD cysteine modification is found at cysteine 308.

This sequence belongs to the MSOX/MTOX family. MTOX subfamily. As to quaternary structure, monomer. FAD is required as a cofactor.

It catalyses the reaction N(alpha)-methyl-L-tryptophan + O2 + H2O = L-tryptophan + formaldehyde + H2O2. Functionally, catalyzes the oxidative demethylation of N-methyl-L-tryptophan. The sequence is that of N-methyl-L-tryptophan oxidase from Escherichia coli O9:H4 (strain HS).